A 392-amino-acid chain; its full sequence is Selenide, water dikinase 1 (392 aa).

The active site involves cysteine 31. ATP-binding positions include lysine 32, 67–69 (GMD), aspartate 87, aspartate 110, and 161–164 (GGQT). A Mg(2+)-binding site is contributed by aspartate 69. Aspartate 110 lines the Mg(2+) pocket. Aspartate 265 is a binding site for Mg(2+). The residue at position 387 (threonine 387) is a Phosphothreonine.

It belongs to the selenophosphate synthase 1 family. Class II subfamily. Homodimer. Mg(2+) is required as a cofactor.

It is found in the cell membrane. The protein resides in the nucleus membrane. The enzyme catalyses hydrogenselenide + ATP + H2O = selenophosphate + AMP + phosphate + 2 H(+). Synthesizes selenophosphate from selenide and ATP. The chain is Selenide, water dikinase 1 (sephs1) from Danio rerio (Zebrafish).